A 214-amino-acid polypeptide reads, in one-letter code: ATP phosphoribosyltransferase (214 aa).

This sequence belongs to the ATP phosphoribosyltransferase family. Short subfamily. As to quaternary structure, heteromultimer composed of HisG and HisZ subunits.

It localises to the cytoplasm. It carries out the reaction 1-(5-phospho-beta-D-ribosyl)-ATP + diphosphate = 5-phospho-alpha-D-ribose 1-diphosphate + ATP. Its pathway is amino-acid biosynthesis; L-histidine biosynthesis; L-histidine from 5-phospho-alpha-D-ribose 1-diphosphate: step 1/9. Functionally, catalyzes the condensation of ATP and 5-phosphoribose 1-diphosphate to form N'-(5'-phosphoribosyl)-ATP (PR-ATP). Has a crucial role in the pathway because the rate of histidine biosynthesis seems to be controlled primarily by regulation of HisG enzymatic activity. This is ATP phosphoribosyltransferase from Halorhodospira halophila (strain DSM 244 / SL1) (Ectothiorhodospira halophila (strain DSM 244 / SL1)).